The sequence spans 83 residues: ATP synthase subunit c, chloroplastic (83 aa).

A run of 2 helical transmembrane segments spans residues 4–24 and 57–77; these read IISAASVIAAGLAVGLAAIGP and LAFMEALTIYGLVVALSLLFA.

Belongs to the ATPase C chain family. F-type ATPases have 2 components, F(1) - the catalytic core - and F(0) - the membrane proton channel. F(1) has five subunits: alpha(3), beta(3), gamma(1), delta(1), epsilon(1). F(0) has four main subunits: a(1), b(1), b'(1) and c(10-14). The alpha and beta chains form an alternating ring which encloses part of the gamma chain. F(1) is attached to F(0) by a central stalk formed by the gamma and epsilon chains, while a peripheral stalk is formed by the delta, b and b' chains.

It is found in the plastid. The protein localises to the chloroplast thylakoid membrane. F(1)F(0) ATP synthase produces ATP from ADP in the presence of a proton or sodium gradient. F-type ATPases consist of two structural domains, F(1) containing the extramembraneous catalytic core and F(0) containing the membrane proton channel, linked together by a central stalk and a peripheral stalk. During catalysis, ATP synthesis in the catalytic domain of F(1) is coupled via a rotary mechanism of the central stalk subunits to proton translocation. Its function is as follows. Key component of the F(0) channel; it plays a direct role in translocation across the membrane. A homomeric c-ring of between 10-14 subunits forms the central stalk rotor element with the F(1) delta and epsilon subunits. This chain is ATP synthase subunit c, chloroplastic, found in Galdieria sulphuraria (Red alga).